The sequence spans 59 residues: Small, acid-soluble spore protein H (59 aa).

The protein belongs to the SspH family.

The protein resides in the spore core. The protein is Small, acid-soluble spore protein H of Bacillus licheniformis (strain ATCC 14580 / DSM 13 / JCM 2505 / CCUG 7422 / NBRC 12200 / NCIMB 9375 / NCTC 10341 / NRRL NRS-1264 / Gibson 46).